Reading from the N-terminus, the 303-residue chain is tRNA-cytidine(32) 2-sulfurtransferase (303 aa).

Residues Ser45–Ser50 carry the PP-loop motif motif. Positions 120, 123, and 211 each coordinate [4Fe-4S] cluster.

The protein belongs to the TtcA family. Homodimer. The cofactor is Mg(2+). [4Fe-4S] cluster serves as cofactor.

The protein localises to the cytoplasm. The catalysed reaction is cytidine(32) in tRNA + S-sulfanyl-L-cysteinyl-[cysteine desulfurase] + AH2 + ATP = 2-thiocytidine(32) in tRNA + L-cysteinyl-[cysteine desulfurase] + A + AMP + diphosphate + H(+). It functions in the pathway tRNA modification. Functionally, catalyzes the ATP-dependent 2-thiolation of cytidine in position 32 of tRNA, to form 2-thiocytidine (s(2)C32). The sulfur atoms are provided by the cysteine/cysteine desulfurase (IscS) system. This Methylobacillus flagellatus (strain ATCC 51484 / DSM 6875 / VKM B-1610 / KT) protein is tRNA-cytidine(32) 2-sulfurtransferase.